Consider the following 106-residue polypeptide: Urease subunit beta (106 aa).

This sequence belongs to the urease beta subunit family. As to quaternary structure, heterotrimer of UreA (gamma), UreB (beta) and UreC (alpha) subunits. Three heterotrimers associate to form the active enzyme.

The protein resides in the cytoplasm. The catalysed reaction is urea + 2 H2O + H(+) = hydrogencarbonate + 2 NH4(+). It participates in nitrogen metabolism; urea degradation; CO(2) and NH(3) from urea (urease route): step 1/1. This is Urease subunit beta from Synechococcus sp. (strain CC9902).